A 636-amino-acid chain; its full sequence is MKRKLNENNEPVLVSGTNKKKSDTEVSSAVANATPSSEAASSSSFADLGLDPRLLQAVAQQSFQKPTLVQSKAIPLALEGRDVLAKAKTGSGKTAAYVLPILQAVLKRKQINPGATYISSLILVPTRELTVQVTKEVERFSAFCAKEVQVVGLTDKVSDAVQRSLLQSSSPDIVVSTPSTAWRNVDSGALSLDKLTHLVLDEADLVLSYGYDEDLEKVARGLPKGVQTVMTSATLTDEIDTLKGIFLRDPVLLDLEEPDAEGSEITQYIVKCGEDEKFLLAYILFKLQLIKGKVIIFVADVDRCYRLKLFFEQFGIRSCILNSELPVNSRISVVEEFNRNVYDIIIASDENEMMGDEDRPAPNGDGKEEAEVDKKHENEDEGQDGEASKAAPRPKKKRKMDRKRDKQYGVSRGIDFKNVAVVVNFDLPLSSTSYTHRIGRTGRAGQAGMVLSFYVPKELFRKHIPTSIDSAENDEKVLARVIKQQKKLGREIKPYNFDRDQVESFRYRMNDALRAVTKIAVREARTRELRQELLKSEKLKRHFEENPAELQHLVRHDGELRTARANPELRHVPDYLLPKEGRKGLSAAEIGFVPLRKSSDRQKKGRFFKKGGARSFKAGGRKPDPLKTFKAKRKTK.

The interval 1-44 (MKRKLNENNEPVLVSGTNKKKSDTEVSSAVANATPSSEAASSSS) is disordered. Low complexity predominate over residues 31–44 (ANATPSSEAASSSS). A Q motif motif is present at residues 43–71 (SSFADLGLDPRLLQAVAQQSFQKPTLVQS). Positions 74–253 (IPLALEGRDV…GIFLRDPVLL (180 aa)) constitute a Helicase ATP-binding domain. Position 87–94 (87–94 (AKTGSGKT)) interacts with ATP. The DEAD box signature appears at 201–204 (DEAD). The Helicase C-terminal domain maps to 264–489 (EITQYIVKCG…RVIKQQKKLG (226 aa)). 2 disordered regions span residues 352 to 407 (EMMG…RDKQ) and 600 to 636 (DRQKKGRFFKKGGARSFKAGGRKPDPLKTFKAKRKTK). Residues 356-378 (DEDRPAPNGDGKEEAEVDKKHEN) are compositionally biased toward basic and acidic residues. Composition is skewed to basic residues over residues 392 to 401 (PRPKKKRKMD) and 603 to 612 (KKGRFFKKGG).

This sequence belongs to the DEAD box helicase family. DDX56/DBP9 subfamily.

It localises to the nucleus. It is found in the nucleolus. It catalyses the reaction ATP + H2O = ADP + phosphate + H(+). In terms of biological role, ATP-binding RNA helicase involved in the biogenesis of 60S ribosomal subunits and is required for the normal formation of 25S and 5.8S rRNAs. The protein is ATP-dependent RNA helicase DBP9 (DBP9) of Pyricularia oryzae (strain 70-15 / ATCC MYA-4617 / FGSC 8958) (Rice blast fungus).